A 444-amino-acid chain; its full sequence is Protein CPn_0808/CP_1063/CPj0808/CpB0837 (444 aa).

Residues 1–13 are compositionally biased toward polar residues; that stretch reads MTSGVSGSSSQDP. The segment at 1-124 is disordered; the sequence is MTSGVSGSSS…NNYDSPSLPT (124 aa). Positions 15-24 are enriched in low complexity; sequence LAAQLAQSSQ. Positions 25-42 are enriched in polar residues; that stretch reads KAGNAQSGHDTKNVTKQG. Positions 77–86 are enriched in basic and acidic residues; the sequence is SKGEKSEKSG. The span at 88–103 shows a compositional bias: low complexity; it reads SKSSTSVASASETATA. Residues 113–124 are compositionally biased toward polar residues; sequence RQNNYDSPSLPT.

Belongs to the chlamydial CPn_0808/CT_579/TC_0868 family.

This is Protein CPn_0808/CP_1063/CPj0808/CpB0837 from Chlamydia pneumoniae (Chlamydophila pneumoniae).